We begin with the raw amino-acid sequence, 729 residues long: GIHVAGGRGKGYACLMPPLRPKAQAQSAQEHFEIFPYEQETNAGLALVGELKQGVYVSCPTKTSFERTPESYHLGLPCEKEPSILSSHDPRIPEHVEGYCPFRAGIQKYANPMGHLDHDLMYEVAHDMQESWHDCVQDFTFPEVDLETAINGIDMVEYMECIPKSTSEGFPHVLSRAPGEKGKMRFLEGDGEKFSLREGTSVKKAYDLLQEEIDRSVPTLVAIECPKDEKLPLRKIYTSPKTRCFSILPMEYNLLVRQKFLHFVRFMMKRRDVLPSQVGVNPYSLEWGAIARRLQEVGNSILCCDYSSFDGLMSSQVMSCIADTMNDFMGGDVSLKRQRKNLLMACCSRFSVVKGNVWRVEGGIPSGFPLTVVMNGIFNELLVRYCFKKIMREGGATPLECSAFDSYIRFVVYGDDNLISVSPVIHDKFNGKLLKECMARFGVTITDGKDKTLPTLEFRPLEDCDFLKRGFIQRSELVWDAPEERSSLYTQLHYVSTKMQSLEDAYTGNLVNVIRELYMHSPKEASDLRRKALRDLPWLSRSKIGTMENVQAFYAMQRAGYRMDESIDVICDLAKLGKYVKGEACKEIVWLTPTVGACDLRYFDWQNAKVDEFWVLCQTNYHEFDENRVMQLCWTPGSGRGGLPTAHWLRTCMLLEKGNVRKKLHWAMAEKKKIIFCAKGGVLIPTVMAGIFLSKEDPMLNLAGVSTLTCAMESVKTLGFLKEGNLNLF.

The 21-residue stretch at 1-21 (GIHVAGGRGKGYACLMPPLRP) folds into the Peptidase C3 domain. Residues 299–429 (NSILCCDYSS…SVSPVIHDKF (131 aa)) enclose the RdRp catalytic domain.

Specific enzymatic cleavages by picornain 3C-like protease in vivo yield mature proteins. Picornain 3C-like protease is autocatalytically processed.

The protein resides in the host endoplasmic reticulum. The catalysed reaction is RNA(n) + a ribonucleoside 5'-triphosphate = RNA(n+1) + diphosphate. Its function is as follows. Thiol protease that cleaves the RNA1 and RNA2 polyproteins. Functionally, replicates the viral genome. This chain is RNA1 polyprotein, found in Solanum tuberosum (Potato).